A 247-amino-acid polypeptide reads, in one-letter code: MDTEAIGLAIAFFVIALAYAAVGQAGASGYIAAMALSGFSPLAIKPTALALNLMVSAIGTAQFLKVGQVSWRNVYPFAILGFPASALGGSVHLPERVYHPVLGLILVVSAIQMARSALRKSALVITIPKTPPLHAALITGAVIGFVSGTTGSGGGVFLAPVILFKNWGTAHQTAATTAVYNLMNSTAALIGACASWNALPNFLPWWLIAVAAGGSIGALIGSRYLSASWLRVILSVLLMVSGLKLLW.

Helical transmembrane passes span 5 to 25 (AIGL…VGQA), 31 to 51 (IAAM…ALAL), 74 to 94 (VYPF…VHLP), 121 to 141 (SALV…ITGA), 202 to 222 (FLPW…LIGS), and 227 to 247 (ASWL…KLLW).

Belongs to the 4-toluene sulfonate uptake permease (TSUP) (TC 2.A.102) family.

It localises to the cell membrane. The sequence is that of Probable membrane transporter protein y4hK from Sinorhizobium fredii (strain NBRC 101917 / NGR234).